We begin with the raw amino-acid sequence, 300 residues long: O-methyltransferase phiE (300 aa).

S-adenosyl-L-methionine-binding positions include 130 to 131 (DL) and 157 to 158 (DV).

This sequence belongs to the class I-like SAM-binding methyltransferase superfamily. Homodimer.

It carries out the reaction phomoidride A + S-adenosyl-L-methionine = (-)-phomoidride B + methanol + S-adenosyl-L-homocysteine + H(+). The protein operates within secondary metabolite biosynthesis. In terms of biological role, O-methyltransferase; part of the gene cluster that mediates the biosynthesis of the antihypercholesterolemic agents phomoidrides which are dimeric anhydrides. Within the pathway, phiE catalyzes the acetalization reaction that converts phomoidride A to phomoidride B. The pathway begins with the highly reducing polyketide synthase phiA that catalyzes the formation of a C12-fatty acyl-ACP, starting from one acetate and 5 malonate units. The hydrolase phiM is involved in the release of the C12-fatty acyl chain from phiA. The alkylcitrate synthase (ACS) phiJ and the alkylcitrate dehydratase (ACDH) phiI then give rise to decarboxylated monomeric anhydrides by coupling the C12-fatty acyl chain with oxalacetic acid. The cyclase phiC is responsible for the dimerization of the monomeric anhydrides which leads to the production of prephomoidride that contains the characteristic bicyclo[4.3.1]deca-1,6-diene system of phomoidrides. Iterative oxidation catalyzed by the alpha-ketoglutarate-dependent dioxygenase phiK produced then phomoidride A. Finally, the methyltransferase phiE converts phomoidride A to phomoidride B via an acetalization reaction. The phosphatidylethanolamine-binding protein phiB and phiN are not essential for dimerization and their functions have still to be determined. The sequence is that of O-methyltransferase phiE from Fungal sp. (strain ATCC 74256).